A 265-amino-acid polypeptide reads, in one-letter code: Hydroxyethylthiazole kinase (265 aa).

Position 50 (Met50) interacts with substrate. Arg125 and Thr171 together coordinate ATP. Residue Gly198 coordinates substrate.

Belongs to the Thz kinase family. It depends on Mg(2+) as a cofactor.

The catalysed reaction is 5-(2-hydroxyethyl)-4-methylthiazole + ATP = 4-methyl-5-(2-phosphooxyethyl)-thiazole + ADP + H(+). It participates in cofactor biosynthesis; thiamine diphosphate biosynthesis; 4-methyl-5-(2-phosphoethyl)-thiazole from 5-(2-hydroxyethyl)-4-methylthiazole: step 1/1. Catalyzes the phosphorylation of the hydroxyl group of 4-methyl-5-beta-hydroxyethylthiazole (THZ). This Salmonella paratyphi A (strain ATCC 9150 / SARB42) protein is Hydroxyethylthiazole kinase.